Here is a 70-residue protein sequence, read N- to C-terminus: Large ribosomal subunit protein eL43 (70 aa).

Residues Cys-36, Cys-39, Cys-55, and Cys-58 each contribute to the Zn(2+) site. Residues 36–58 (CPVCKTTGKVVRIASGVWYCKKC) form a C4-type zinc finger.

The protein belongs to the eukaryotic ribosomal protein eL43 family. Putative zinc-binding subfamily. In terms of assembly, part of the 50S ribosomal subunit. Requires Zn(2+) as cofactor.

Binds to the 23S rRNA. This is Large ribosomal subunit protein eL43 from Sulfurisphaera tokodaii (strain DSM 16993 / JCM 10545 / NBRC 100140 / 7) (Sulfolobus tokodaii).